The chain runs to 30 residues: Cycloviolacin-O20 (30 aa).

The cyclopeptide (Gly-Asp) cross-link spans 1 to 30 (GIPCGESCVWIPCLTSAIGCSCKSKVCYRD). Disulfide bonds link Cys-4–Cys-20, Cys-8–Cys-22, and Cys-13–Cys-27.

Post-translationally, this is a cyclic peptide.

Functionally, probably participates in a plant defense mechanism. This is Cycloviolacin-O20 from Viola odorata (Sweet violet).